The chain runs to 173 residues: RNA pyrophosphohydrolase (173 aa).

Residues 11–164 (PYRKCVGILV…KKHVYTQVVK (154 aa)) form the Nudix hydrolase domain. The short motif at 52 to 73 (GGINQGEKPIDAARRELYEETG) is the Nudix box element.

The protein belongs to the Nudix hydrolase family. RppH subfamily. It depends on a divalent metal cation as a cofactor.

In terms of biological role, accelerates the degradation of transcripts by removing pyrophosphate from the 5'-end of triphosphorylated RNA, leading to a more labile monophosphorylated state that can stimulate subsequent ribonuclease cleavage. This chain is RNA pyrophosphohydrolase, found in Bartonella clarridgeiae.